The chain runs to 535 residues: Sucrose transport protein SUT5 (535 aa).

At M1 to R53 the chain is on the cytoplasmic side. Residues L54–L74 traverse the membrane as a helical segment. Residues L75 to S87 are Extracellular-facing. Residues Y88–G108 form a helical membrane-spanning segment. Residues Y109–R122 are Cytoplasmic-facing. A helical membrane pass occupies residues P123–A143. The Extracellular segment spans residues D144 to R163. A helical membrane pass occupies residues W164–V184. The Cytoplasmic portion of the chain corresponds to Q185 to N203. A helical transmembrane segment spans residues V204–G224. Topologically, residues A225–K249 are extracellular. A helical transmembrane segment spans residues G250–A270. The Cytoplasmic portion of the chain corresponds to D271–P302. The helical transmembrane segment at P303–I323 threads the bilayer. Over Q324–R354 the chain is Extracellular. A helical transmembrane segment spans residues E355 to P375. Topologically, residues K376 to K384 are cytoplasmic. The chain crosses the membrane as a helical span at residues V385–G405. The Extracellular segment spans residues M406 to A429. The chain crosses the membrane as a helical span at residues V430–W450. Topologically, residues A451–G465 are cytoplasmic. Residues L466–A486 traverse the membrane as a helical segment. The Extracellular segment spans residues G487–T498. Residues P499–L519 form a helical membrane-spanning segment. Over P520–H535 the chain is Cytoplasmic.

This sequence belongs to the glycoside-pentoside-hexuronide (GPH) cation symporter transporter (TC 2.A.2.4) family. In terms of assembly, homodimer.

It is found in the cell membrane. Its pathway is glycan biosynthesis; sucrose metabolism. In terms of biological role, responsible for the transport of sucrose into the cell, with the concomitant uptake of protons (symport system). May also transport other glucosides. This chain is Sucrose transport protein SUT5 (SUT5), found in Oryza sativa subsp. indica (Rice).